A 447-amino-acid chain; its full sequence is SPARC-related modular calcium-binding protein 2 (447 aa).

Residues 1-21 (MLPPQLCWLPLLAALLPPVPA) form the signal peptide. One can recognise a Kazal-like domain in the interval 34-86 (QDKDRDCSLDCPSSPQKPLCASDGRTFLSRCEFQRAKCKDPQLEIAHRGNCKD). 6 disulfides stabilise this stretch: cysteine 40-cysteine 71, cysteine 44-cysteine 64, cysteine 53-cysteine 84, cysteine 90-cysteine 113, cysteine 124-cysteine 131, and cysteine 133-cysteine 153. The region spanning 87–153 (VSRCVAERKY…TAVAHKTPRC (67 aa)) is the Thyroglobulin type-1 1 domain. A disordered region spans residues 147-230 (AHKTPRCPGS…QSALEEAKQP (84 aa)). Residues 161–172 (VPQREGAGKADD) show a composition bias toward basic and acidic residues. Residue asparagine 206 is glycosylated (N-linked (GlcNAc...) asparagine). The segment covering 206–216 (NKTNKNSASSC) has biased composition (polar residues). The Thyroglobulin type-1 2 domain maps to 213–281 (ASSCDQEHQS…TSTRYEQPKC (69 aa)). 3 cysteine pairs are disulfide-bonded: cysteine 216-cysteine 240, cysteine 251-cysteine 258, and cysteine 260-cysteine 281. Basic and acidic residues predominate over residues 217-230 (DQEHQSALEEAKQP). 2 consecutive EF-hand domains span residues 347–382 (LEER…LRKK) and 384–419 (KPKK…TREE). Positions 360, 362, 364, 366, 371, 397, 399, 401, 403, and 408 each coordinate Ca(2+). N-linked (GlcNAc...) asparagine glycosylation is present at asparagine 362. Positions 416–447 (TREEGKANTRKRHTPRGNAESSSSNRQPRKQG) are disordered.

As to quaternary structure, binds various proteins from the extracellular matrix. Post-translationally, N-glycosylated. As to expression, strongly expressed in ovary, followed by heart, muscle, spleen, brain, thymus, lung, liver, kidney, spleen, testis, ovary and skeletal muscle.

The protein resides in the secreted. Its subcellular location is the extracellular space. It is found in the extracellular matrix. The protein localises to the basement membrane. Functionally, can stimulate endothelial cell proliferation, migration, as well as angiogenesis. Promotes matrix assembly and cell adhesiveness. This is SPARC-related modular calcium-binding protein 2 (Smoc2) from Mus musculus (Mouse).